The following is a 213-amino-acid chain: Adenylyl-sulfate kinase (213 aa).

Residues 1–17 (MPAHQLDDHNQETRSDD) are compositionally biased toward basic and acidic residues. The segment at 1–20 (MPAHQLDDHNQETRSDDENI) is disordered. Residue 47-54 (GLSGSGKS) participates in ATP binding. The active-site Phosphoserine intermediate is the S121.

This sequence belongs to the APS kinase family.

The enzyme catalyses adenosine 5'-phosphosulfate + ATP = 3'-phosphoadenylyl sulfate + ADP + H(+). It functions in the pathway sulfur metabolism; hydrogen sulfide biosynthesis; sulfite from sulfate: step 2/3. Catalyzes the synthesis of activated sulfate. The protein is Adenylyl-sulfate kinase of Yersinia pestis.